A 963-amino-acid chain; its full sequence is MHC class II regulatory factor RFX1 (963 aa).

4 disordered regions span residues Met-1–Pro-88, Ala-105–Gln-126, Gln-174–Ala-218, and Ser-361–Gly-392. The segment covering Pro-20 to Ala-41 has biased composition (pro residues). Low complexity predominate over residues Ala-42–Gln-67. Residue Ser-54 is modified to Phosphoserine. The span at Ala-75–Ser-87 shows a compositional bias: pro residues. 3 stretches are compositionally biased toward polar residues: residues Glu-107–Ser-119, Lys-181–His-196, and Val-204–Ala-214. Residues Ser-361–Val-372 show a composition bias toward low complexity. The span at Gly-373–Gly-392 shows a compositional bias: gly residues. The RFX-type winged-helix DNA-binding region spans Thr-423 to Ala-498. The interval Ser-899–Ala-948 is disordered. The span at Asp-906–Pro-922 shows a compositional bias: acidic residues. Over residues Glu-932–Leu-947 the composition is skewed to low complexity. Ser-962 and Ser-963 each carry phosphoserine.

It belongs to the RFX family. In terms of assembly, homodimer; binds DNA as a homodimer. Heterodimer; heterodimerizes with RFX2 and RFX3.

The protein resides in the nucleus. Its function is as follows. Regulatory factor essential for MHC class II genes expression. Binds to the X boxes of MHC class II genes. This Mus musculus (Mouse) protein is MHC class II regulatory factor RFX1 (Rfx1).